The sequence spans 175 residues: uncharacterized protein (175 aa).

This is an uncharacterized protein from Methanocaldococcus jannaschii (strain ATCC 43067 / DSM 2661 / JAL-1 / JCM 10045 / NBRC 100440) (Methanococcus jannaschii).